A 377-amino-acid polypeptide reads, in one-letter code: Palmitoyltransferase ZDHHC16 (377 aa).

At 1–79 (MRGQWSLLLG…WLVDNVIRWC (79 aa)) the chain is on the cytoplasmic side. The chain crosses the membrane as a helical span at residues 80–100 (GVVFVVLVIVLTSSIVAIAYL). Residues 101–116 (CVLPLILQTYSVPRLC) are Lumenal-facing. The helical transmembrane segment at 117–137 (WHFFYSHWNLILIVFHYYQAI) threads the bilayer. Topologically, residues 138–198 (TTPPGYPPQG…NNCVGHYNHR (61 aa)) are cytoplasmic. Positions 155–205 (SICKKCINPKPARTHHCSICNRCVLKMDHHCPWLNNCVGHYNHRYFFSFCF) constitute a DHHC domain. The active-site S-palmitoyl cysteine intermediate is Cys-185. The chain crosses the membrane as a helical span at residues 199-219 (YFFSFCFFMTLGCVYCSYGSW). The Lumenal portion of the chain corresponds to 220–266 (DLFREAYAAIEKMKQLDKNKLQAVANQTYHQTPPPTFSFRERVTHKS). Residues 267–287 (LVYLWFLCSSVALALGALTIW) form a helical membrane-spanning segment. Residues 288 to 377 (HAVLISRGET…TAHSASVMAV (90 aa)) lie on the Cytoplasmic side of the membrane.

The protein belongs to the DHHC palmitoyltransferase family. As to quaternary structure, interacts with ABL1. Interacts with COPS5/JAB1.

The protein resides in the endoplasmic reticulum membrane. It catalyses the reaction L-cysteinyl-[protein] + hexadecanoyl-CoA = S-hexadecanoyl-L-cysteinyl-[protein] + CoA. Its function is as follows. Palmitoyl acyltransferase that mediates palmitoylation of proteins such as PLN and ZDHHC6. Required during embryonic heart development and cardiac function, possibly by mediating palmitoylation of PLN, thereby affecting PLN phosphorylation and homooligomerization. Also required for eye development. Palmitoylates ZDHHC6, affecting the quaternary assembly of ZDHHC6, its localization, stability and function. May play a role in DNA damage response. May be involved in apoptosis regulation. Involved in the proliferation of neural stem cells by regulating the FGF/ERK pathway. The polypeptide is Palmitoyltransferase ZDHHC16 (Bos taurus (Bovine)).